Reading from the N-terminus, the 117-residue chain is Ribonuclease P protein component (117 aa).

It belongs to the RnpA family. Consists of a catalytic RNA component (M1 or rnpB) and a protein subunit.

It carries out the reaction Endonucleolytic cleavage of RNA, removing 5'-extranucleotides from tRNA precursor.. RNaseP catalyzes the removal of the 5'-leader sequence from pre-tRNA to produce the mature 5'-terminus. It can also cleave other RNA substrates such as 4.5S RNA. The protein component plays an auxiliary but essential role in vivo by binding to the 5'-leader sequence and broadening the substrate specificity of the ribozyme. This is Ribonuclease P protein component from Thermotoga petrophila (strain ATCC BAA-488 / DSM 13995 / JCM 10881 / RKU-1).